A 145-amino-acid chain; its full sequence is MNIIAELEAEQAAKLLAGKTIPEFQPGDTVIVNVKVKEGERTRVQAYEGVCIARNGGGLNESFTVRKISYGEGVERVFAIYSPNIDSIKVVRRGKVRRAKLYYLRDRRGKSARIAEKMESPAAKATREAAKKEAKAAKKNAAPAE.

The segment covering 114-136 has biased composition (basic and acidic residues); it reads IAEKMESPAAKATREAAKKEAKA. The disordered stretch occupies residues 114–145; the sequence is IAEKMESPAAKATREAAKKEAKAAKKNAAPAE.

Belongs to the bacterial ribosomal protein bL19 family.

In terms of biological role, this protein is located at the 30S-50S ribosomal subunit interface and may play a role in the structure and function of the aminoacyl-tRNA binding site. In Methylocella silvestris (strain DSM 15510 / CIP 108128 / LMG 27833 / NCIMB 13906 / BL2), this protein is Large ribosomal subunit protein bL19.